We begin with the raw amino-acid sequence, 345 residues long: 4-hydroxythreonine-4-phosphate dehydrogenase (345 aa).

Substrate contacts are provided by His-148 and Thr-149. A divalent metal cation contacts are provided by His-182, His-227, and His-282. Positions 290, 299, and 308 each coordinate substrate.

This sequence belongs to the PdxA family. As to quaternary structure, homodimer. Requires Zn(2+) as cofactor. The cofactor is Mg(2+). It depends on Co(2+) as a cofactor.

It localises to the cytoplasm. It carries out the reaction 4-(phosphooxy)-L-threonine + NAD(+) = 3-amino-2-oxopropyl phosphate + CO2 + NADH. It participates in cofactor biosynthesis; pyridoxine 5'-phosphate biosynthesis; pyridoxine 5'-phosphate from D-erythrose 4-phosphate: step 4/5. Catalyzes the NAD(P)-dependent oxidation of 4-(phosphooxy)-L-threonine (HTP) into 2-amino-3-oxo-4-(phosphooxy)butyric acid which spontaneously decarboxylates to form 3-amino-2-oxopropyl phosphate (AHAP). This is 4-hydroxythreonine-4-phosphate dehydrogenase from Bradyrhizobium diazoefficiens (strain JCM 10833 / BCRC 13528 / IAM 13628 / NBRC 14792 / USDA 110).